The following is a 424-amino-acid chain: Hemagglutinin-esterase (424 aa).

2 signal peptides span residues 1 to 16 and 1 to 18; these read MFLL…IIGS and MFLL…GSLG. The interval 7 to 127 is esterase domain 1; sequence FVLVSCIIGS…SNDIWMQNKG (121 aa). The Virion surface segment spans residues 17–392; it reads LGFDNPPTNV…PICVYDPLPL (376 aa). Serine 40 acts as the Nucleophile in catalysis. A disulfide bridge connects residues cysteine 44 and cysteine 65. N-linked (GlcNAc...) asparagine; by host glycans are attached at residues asparagine 54, asparagine 89, asparagine 153, asparagine 236, and asparagine 301. 3 cysteine pairs are disulfide-bonded: cysteine 113–cysteine 162, cysteine 197–cysteine 276, and cysteine 205–cysteine 249. Residues 128–266 are receptor binding; that stretch reads LFYTQVYKNM…GNYLAISNEL (139 aa). Residues 267-379 are esterase domain 2; the sequence is LLTVPTKAIC…RCPTAADINT (113 aa). Cysteine 307 and cysteine 312 form a disulfide bridge. Asparagine 316 carries N-linked (GlcNAc...) asparagine; by host glycosylation. Catalysis depends on charge relay system residues aspartate 326 and histidine 329. A disulfide bridge connects residues cysteine 347 and cysteine 371. Residue asparagine 358 is glycosylated (N-linked (GlcNAc...) asparagine; by host). A helical transmembrane segment spans residues 393–413; the sequence is ILLGILLGVAVIIIVVLLLYF. Residues 414–424 lie on the Intravirion side of the membrane; that stretch reads MVDNGTRLHDA. N-linked (GlcNAc...) asparagine; by host glycosylation occurs at asparagine 417.

The protein belongs to the influenza type C/coronaviruses hemagglutinin-esterase family. As to quaternary structure, homodimer; disulfide-linked. Forms a complex with the M protein in the pre-Golgi. Associates then with S-M complex to form a ternary complex S-M-HE. Post-translationally, N-glycosylated in the host RER.

The protein localises to the virion membrane. Its subcellular location is the host cell membrane. It catalyses the reaction N-acetyl-9-O-acetylneuraminate + H2O = N-acetylneuraminate + acetate + H(+). The enzyme catalyses N-acetyl-4-O-acetylneuraminate + H2O = N-acetylneuraminate + acetate + H(+). Structural protein that makes short spikes at the surface of the virus. Contains receptor binding and receptor-destroying activities. Mediates de-O-acetylation of N-acetyl-4-O-acetylneuraminic acid, which is probably the receptor determinant recognized by the virus on the surface of erythrocytes and susceptible cells. This receptor-destroying activity is important for virus release as it probably helps preventing self-aggregation and ensures the efficient spread of the progeny virus from cell to cell. May serve as a secondary viral attachment protein for initiating infection, the spike protein being the major one. May become a target for both the humoral and the cellular branches of the immune system. In Bos taurus (Bovine), this protein is Hemagglutinin-esterase.